The following is an 854-amino-acid chain: Golgin subfamily A member 6-like protein 22 (854 aa).

6 disordered regions span residues 1–114, 320–348, 366–447, 481–568, 581–681, and 714–854; these read MLMW…HQEA, QEEK…MRRQ, MHEQ…MWRQ, QEEK…MWRQ, RQEE…EQEE, and QEEK…MQEH. A compositionally biased stretch (basic residues) spans 15-35; sequence LPTHPHLPTHPHLPTHPHLPT. The span at 45-66 shows a compositional bias: basic and acidic residues; that stretch reads MSKETRQSKLAEAKEQLTDHHP. 2 stretches are compositionally biased toward polar residues: residues 67–77 and 85–97; these read QTNPSVGTAAS and NNGT…TSGG. Residues 100–114 show a composition bias toward basic and acidic residues; that stretch reads SPEDEQKASHQHQEA. Positions 103–854 form a coiled coil; it reads DEQKASHQHQ…RQQEEKMQEH (752 aa).

It belongs to the GOLGA6 family.

In Homo sapiens (Human), this protein is Golgin subfamily A member 6-like protein 22.